A 407-amino-acid polypeptide reads, in one-letter code: uncharacterized protein (407 aa).

The Lumenal portion of the chain corresponds to 1–290 (MPLNIIGTAL…SNSLRRVISN (290 aa)). Residues D114, K236, and S281 each contribute to the NADP(+) site. K236 acts as the Lowers pKa of active site Tyr in catalysis. A helical transmembrane segment spans residues 291–311 (GSVVLLIILYCILLYPILWLF). Topologically, residues 312 to 407 (TKSGRRGDQS…KSQNKSRKDD (96 aa)) are cytoplasmic. A coiled-coil region spans residues 361–390 (ELQKKLFDNTERDILQLEKKVAAKRNANKT). A disordered region spans residues 383 to 407 (AKRNANKTGNQNSKKKSQNKSRKDD). Basic residues predominate over residues 395–407 (SKKKSQNKSRKDD).

It belongs to the short-chain dehydrogenases/reductases (SDR) family.

It is found in the endoplasmic reticulum membrane. Its function is as follows. May be involved in lipid metabolism. This is an uncharacterized protein from Saccharomyces cerevisiae (strain ATCC 204508 / S288c) (Baker's yeast).